A 158-amino-acid polypeptide reads, in one-letter code: Peptide methionine sulfoxide reductase MsrA (158 aa).

The active site involves cysteine 10.

The protein belongs to the MsrA Met sulfoxide reductase family.

It catalyses the reaction L-methionyl-[protein] + [thioredoxin]-disulfide + H2O = L-methionyl-(S)-S-oxide-[protein] + [thioredoxin]-dithiol. It carries out the reaction [thioredoxin]-disulfide + L-methionine + H2O = L-methionine (S)-S-oxide + [thioredoxin]-dithiol. In terms of biological role, has an important function as a repair enzyme for proteins that have been inactivated by oxidation. Catalyzes the reversible oxidation-reduction of methionine sulfoxide in proteins to methionine. The sequence is that of Peptide methionine sulfoxide reductase MsrA from Alkaliphilus metalliredigens (strain QYMF).